The following is a 196-amino-acid chain: APGW-amide-related neuropeptide (196 aa).

The signal sequence occupies residues 1–22 (METLNIFLVIFSLLGTIIIASS). Residues 23-48 (SDESSERKKRDLDTIDDTNNDFLTAD) constitute a propeptide that is removed on maturation. Tryptophan amide is present on tryptophan 54. A propeptide spanning residues 58–68 (SFDDDILNNLD) is cleaved from the precursor. Tryptophan 74 is subject to Tryptophan amide. A propeptide spanning residues 78–88 (SDMLFDSEEIE) is cleaved from the precursor. Tryptophan 94 carries the post-translational modification Tryptophan amide. The propeptide occupies 98–105 (SSSLYDDE). Residue tryptophan 111 is modified to Tryptophan amide. A propeptide spanning residues 115–129 (SSALLDDLSLYNSIV) is cleaved from the precursor. A Tryptophan amide modification is found at tryptophan 135. Positions 139 to 146 (SDTFKVDI) are excised as a propeptide. Tryptophan amide is present on residues tryptophan 151 and tryptophan 158. Residues 162 to 196 (SGPNMCMDFQDEILQLYKLLNEAEKLHSECEALNI) constitute a propeptide that is removed on maturation.

In terms of tissue distribution, expressed in cerebral, pedal and visceral ganglia. TPGW-amide is found in pedal and cerebral ganglia and in shell adductor muscle (at protein level). RPGW-amide and KPGW-amide are found in pedal retractor muscle, ABRM and shell adductor muscle (at protein level).

Its function is as follows. RPGW-amide, KPGW-amide and TPGW-amide tetrapeptides are involved in control of muscle contraction and may function as neurotransmitters. These peptides increase tension of the pedal retractor muscle and, in conjunction with FMRF-amide, increase peak tension of the anterior byssus retractor muscle (ABRM). This is APGW-amide-related neuropeptide from Mytilus edulis (Blue mussel).